A 637-amino-acid chain; its full sequence is Choline O-acetyltransferase (637 aa).

Residues 1–13 show a composition bias toward basic and acidic residues; the sequence is MPVSKREQSKDTG. The disordered stretch occupies residues 1-20; sequence MPVSKREQSKDTGDPCALPK. The active-site Proton acceptor is His-329. Residues 407–419, Ser-445, and Gln-545 each bind CoA; that span reads GKEF…MSPD.

This sequence belongs to the carnitine/choline acetyltransferase family.

It carries out the reaction choline + acetyl-CoA = acetylcholine + CoA. Functionally, catalyzes the reversible synthesis of acetylcholine (ACh) from acetyl CoA and choline at cholinergic synapses. The chain is Choline O-acetyltransferase (chat) from Danio rerio (Zebrafish).